A 149-amino-acid chain; its full sequence is UPF0179 protein Mbar_A0292 (149 aa).

Belongs to the UPF0179 family.

This is UPF0179 protein Mbar_A0292 from Methanosarcina barkeri (strain Fusaro / DSM 804).